A 329-amino-acid chain; its full sequence is DNA polymerase III subunit delta' (329 aa).

Component of the DNA clamp loading complex consisting of tau(3):delta(1):delta'(1). The DNA polymerase III holoenzyme complex contains at least 10 different subunits organized into 3 functionally essential subassemblies: the Pol III core, the beta sliding clamp processivity factor and the clamp-loading complex. The Pol III core (subunits alpha, epsilon and theta) contains the polymerase and the 3'-5' exonuclease proofreading activities. The polymerase is tethered to the template via the dimeric beta sliding clamp processivity factor. The DNA clamp-loading complex assembles the beta sliding clamp onto the primed template and plays a central role in the organization and communication at the replication fork.

It localises to the cytoplasm. The protein resides in the nucleoid. It carries out the reaction DNA(n) + a 2'-deoxyribonucleoside 5'-triphosphate = DNA(n+1) + diphosphate. Functionally, DNA polymerase III is a complex, multichain enzyme responsible for most of the replicative synthesis in bacteria. In Bacillus subtilis (strain 168), this protein is DNA polymerase III subunit delta' (holB).